A 150-amino-acid polypeptide reads, in one-letter code: Large ribosomal subunit protein uL13 (150 aa).

This sequence belongs to the universal ribosomal protein uL13 family. In terms of assembly, part of the 50S ribosomal subunit.

Its function is as follows. This protein is one of the early assembly proteins of the 50S ribosomal subunit, although it is not seen to bind rRNA by itself. It is important during the early stages of 50S assembly. The protein is Large ribosomal subunit protein uL13 of Chlorobium phaeobacteroides (strain BS1).